We begin with the raw amino-acid sequence, 369 residues long: NADH-quinone oxidoreductase subunit H (369 aa).

The next 8 helical transmembrane spans lie at 20 to 40 (VLLI…AYLV), 88 to 108 (ICFL…WAVI), 133 to 153 (IGVL…IIAG), 179 to 199 (IGLT…GEIV), 205 to 225 (MPYW…ISSL), 267 to 287 (ILIN…PLNI), 293 to 313 (IPGI…FIWI), and 328 to 348 (LGWK…SGVL).

It belongs to the complex I subunit 1 family. NDH-1 is composed of 14 different subunits. Subunits NuoA, H, J, K, L, M, N constitute the membrane sector of the complex.

It is found in the cell inner membrane. It carries out the reaction a quinone + NADH + 5 H(+)(in) = a quinol + NAD(+) + 4 H(+)(out). Functionally, NDH-1 shuttles electrons from NADH, via FMN and iron-sulfur (Fe-S) centers, to quinones in the respiratory chain. The immediate electron acceptor for the enzyme in this species is believed to be ubiquinone. Couples the redox reaction to proton translocation (for every two electrons transferred, four hydrogen ions are translocated across the cytoplasmic membrane), and thus conserves the redox energy in a proton gradient. This subunit may bind ubiquinone. The polypeptide is NADH-quinone oxidoreductase subunit H (Ehrlichia canis (strain Jake)).